The following is a 466-amino-acid chain: Myocardial zonula adherens protein (466 aa).

A compositionally biased stretch (polar residues) spans 1–10 (MLRSTSTVTL). The N-terminal stretch at 1 to 16 (MLRSTSTVTLFSGGGA) is a signal peptide. The disordered stretch occupies residues 1–68 (MLRSTSTVTL…SNGESTKRLP (68 aa)). Residues 45–55 (TEKKIERKDQP) show a composition bias toward basic and acidic residues. Coiled-coil stretches lie at residues 95 to 137 (NQLK…QDLS) and 187 to 415 (HIKD…LTET).

This sequence belongs to the MYZAP family. Interacts with DSP, MPRIP and TJP1/ZO1. Interaction with MPRIP inhibits the activation of transcription factor SRF. Interacts with GRIN1. Interacts with DYNLL1. As to expression, detected in heart myocardium and lung.

The protein localises to the cytoplasm. Its subcellular location is the cytoskeleton. It is found in the cell membrane. The protein resides in the myofibril. It localises to the sarcomere. The protein localises to the i band. Its subcellular location is the z line. It is found in the cell junction. In terms of biological role, plays a role in cellular signaling via Rho-related GTP-binding proteins and activation of transcription factor SRF. Targets TJP1 to cell junctions. In cortical neurons, may play a role in glutaminergic signal transduction through interaction with the NMDA receptor subunit GRIN1. In Mus musculus (Mouse), this protein is Myocardial zonula adherens protein (Myzap).